The chain runs to 618 residues: V-type proton ATPase catalytic subunit A (618 aa).

Residue 251–258 coordinates ATP; that stretch reads GAFGCGKT.

It belongs to the ATPase alpha/beta chains family. In terms of assembly, V-ATPase is a heteromultimeric enzyme composed of a peripheral catalytic V1 complex (main components: subunits A, B, C, D, E, and F) attached to an integral membrane V0 proton pore complex (main component: the proteolipid protein).

The enzyme catalyses ATP + H2O + 4 H(+)(in) = ADP + phosphate + 5 H(+)(out). Its function is as follows. Catalytic subunit of the peripheral V1 complex of vacuolar ATPase. V-ATPase vacuolar ATPase is responsible for acidifying a variety of intracellular compartments in eukaryotic cells. This Dictyostelium discoideum (Social amoeba) protein is V-type proton ATPase catalytic subunit A (vatA).